The chain runs to 27 residues: Caerulein precursor fragment R4 (27 aa).

Expressed by the skin glands.

Its subcellular location is the secreted. Antimicrobial peptide. The sequence is that of Caerulein precursor fragment R4 from Xenopus ruwenzoriensis (Uganda clawed frog).